Here is a 172-residue protein sequence, read N- to C-terminus: 3-hydroxydecanoyl-[acyl-carrier-protein] dehydratase (172 aa).

Residue histidine 71 is part of the active site.

It belongs to the thioester dehydratase family. FabA subfamily. As to quaternary structure, homodimer.

It localises to the cytoplasm. It carries out the reaction a (3R)-hydroxyacyl-[ACP] = a (2E)-enoyl-[ACP] + H2O. The catalysed reaction is (3R)-hydroxydecanoyl-[ACP] = (2E)-decenoyl-[ACP] + H2O. It catalyses the reaction (2E)-decenoyl-[ACP] = (3Z)-decenoyl-[ACP]. It participates in lipid metabolism; fatty acid biosynthesis. In terms of biological role, necessary for the introduction of cis unsaturation into fatty acids. Catalyzes the dehydration of (3R)-3-hydroxydecanoyl-ACP to E-(2)-decenoyl-ACP and then its isomerization to Z-(3)-decenoyl-ACP. Can catalyze the dehydratase reaction for beta-hydroxyacyl-ACPs with saturated chain lengths up to 16:0, being most active on intermediate chain length. This is 3-hydroxydecanoyl-[acyl-carrier-protein] dehydratase from Escherichia coli (strain SE11).